A 226-amino-acid polypeptide reads, in one-letter code: MTTTELVALLHLASPALPIGAFSYSQGFEAALDANLIRDADTARDWIASGLTDVLAHGELPFLAHQLARWHAHDADALARENAWFIASRESAELRRETEQMGWSLAQLCTSLEWGDAARRATLATISPIALPTAFTYAAAAHDASADAVLAAYAFGWVENQTSAALKAVPLGQLAGQRIIVALRGAIDAAVRRALATPPDAVNTFAPQLGILSARHETQYSRLFRS.

Belongs to the UreF family. In terms of assembly, ureD, UreF and UreG form a complex that acts as a GTP-hydrolysis-dependent molecular chaperone, activating the urease apoprotein by helping to assemble the nickel containing metallocenter of UreC. The UreE protein probably delivers the nickel.

The protein resides in the cytoplasm. Required for maturation of urease via the functional incorporation of the urease nickel metallocenter. The polypeptide is Urease accessory protein UreF (Burkholderia ambifaria (strain MC40-6)).